We begin with the raw amino-acid sequence, 81 residues long: Photosystem I iron-sulfur center (81 aa).

2 consecutive 4Fe-4S ferredoxin-type domains span residues 2-31 (SHSV…MVPW) and 37-68 (GQIA…VRVY). C11, C14, C17, C21, C48, C51, C54, and C58 together coordinate [4Fe-4S] cluster.

As to quaternary structure, the cyanobacterial PSI reaction center is composed of one copy each of PsaA,B,C,D,E,F,I,J,K,L,M and X, and forms trimeric complexes. The cofactor is [4Fe-4S] cluster.

Its subcellular location is the cellular thylakoid membrane. The enzyme catalyses reduced [plastocyanin] + hnu + oxidized [2Fe-2S]-[ferredoxin] = oxidized [plastocyanin] + reduced [2Fe-2S]-[ferredoxin]. Its function is as follows. Apoprotein for the two 4Fe-4S centers FA and FB of photosystem I (PSI); essential for photochemical activity. FB is the terminal electron acceptor of PSI, donating electrons to ferredoxin. The C-terminus interacts with PsaA/B/D and helps assemble the protein into the PSI complex. Required for binding of PsaD and PsaE to PSI. PSI is a plastocyanin/cytochrome c6-ferredoxin oxidoreductase, converting photonic excitation into a charge separation, which transfers an electron from the donor P700 chlorophyll pair to the spectroscopically characterized acceptors A0, A1, FX, FA and FB in turn. In Trichodesmium erythraeum (strain IMS101), this protein is Photosystem I iron-sulfur center.